Here is a 314-residue protein sequence, read N- to C-terminus: Probable cell division protein WhiA (314 aa).

The segment at residues 274–308 is a DNA-binding region (H-T-H motif); that stretch reads SLKELGEMMSTGKISKSGVNHRLRKLNEMADKLRS.

It belongs to the WhiA family.

In terms of biological role, involved in cell division and chromosome segregation. The sequence is that of Probable cell division protein WhiA from Staphylococcus saprophyticus subsp. saprophyticus (strain ATCC 15305 / DSM 20229 / NCIMB 8711 / NCTC 7292 / S-41).